The sequence spans 340 residues: Ketol-acid reductoisomerase (NADP(+)) (340 aa).

The KARI N-terminal Rossmann domain maps to Val-3 to Thr-183. Residues Phe-26–Gln-29, Lys-49, Ser-54, and Asp-84–Gln-87 contribute to the NADP(+) site. Residue His-109 is part of the active site. Gly-135 lines the NADP(+) pocket. One can recognise a KARI C-terminal knotted domain in the interval Thr-184–Ile-329. The Mg(2+) site is built by Asp-192, Glu-196, Glu-228, and Glu-232. Position 253 (Ser-253) interacts with substrate.

It belongs to the ketol-acid reductoisomerase family. It depends on Mg(2+) as a cofactor.

It catalyses the reaction (2R)-2,3-dihydroxy-3-methylbutanoate + NADP(+) = (2S)-2-acetolactate + NADPH + H(+). The catalysed reaction is (2R,3R)-2,3-dihydroxy-3-methylpentanoate + NADP(+) = (S)-2-ethyl-2-hydroxy-3-oxobutanoate + NADPH + H(+). It functions in the pathway amino-acid biosynthesis; L-isoleucine biosynthesis; L-isoleucine from 2-oxobutanoate: step 2/4. Its pathway is amino-acid biosynthesis; L-valine biosynthesis; L-valine from pyruvate: step 2/4. In terms of biological role, involved in the biosynthesis of branched-chain amino acids (BCAA). Catalyzes an alkyl-migration followed by a ketol-acid reduction of (S)-2-acetolactate (S2AL) to yield (R)-2,3-dihydroxy-isovalerate. In the isomerase reaction, S2AL is rearranged via a Mg-dependent methyl migration to produce 3-hydroxy-3-methyl-2-ketobutyrate (HMKB). In the reductase reaction, this 2-ketoacid undergoes a metal-dependent reduction by NADPH to yield (R)-2,3-dihydroxy-isovalerate. In Campylobacter lari (strain RM2100 / D67 / ATCC BAA-1060), this protein is Ketol-acid reductoisomerase (NADP(+)).